Here is a 215-residue protein sequence, read N- to C-terminus: Pyrrolidone-carboxylate peptidase (215 aa).

Residues Glu80, Cys143, and His167 contribute to the active site.

It belongs to the peptidase C15 family. In terms of assembly, homotetramer.

It localises to the cytoplasm. It catalyses the reaction Release of an N-terminal pyroglutamyl group from a polypeptide, the second amino acid generally not being Pro.. Its function is as follows. Removes 5-oxoproline from various penultimate amino acid residues except L-proline. This is Pyrrolidone-carboxylate peptidase from Yersinia pseudotuberculosis serotype O:3 (strain YPIII).